The following is a 272-amino-acid chain: Acetyl-coenzyme A carboxylase carboxyl transferase subunit alpha (272 aa).

Residues 1–248 enclose the CoA carboxyltransferase C-terminal domain; that stretch reads MDKDFMKINV…KKTIVDSLLE (248 aa).

The protein belongs to the AccA family. As to quaternary structure, acetyl-CoA carboxylase is a heterohexamer composed of biotin carboxyl carrier protein (AccB), biotin carboxylase (AccC) and two subunits each of ACCase subunit alpha (AccA) and ACCase subunit beta (AccD).

It localises to the cytoplasm. The enzyme catalyses N(6)-carboxybiotinyl-L-lysyl-[protein] + acetyl-CoA = N(6)-biotinyl-L-lysyl-[protein] + malonyl-CoA. Its pathway is lipid metabolism; malonyl-CoA biosynthesis; malonyl-CoA from acetyl-CoA: step 1/1. Its function is as follows. Component of the acetyl coenzyme A carboxylase (ACC) complex. First, biotin carboxylase catalyzes the carboxylation of biotin on its carrier protein (BCCP) and then the CO(2) group is transferred by the carboxyltransferase to acetyl-CoA to form malonyl-CoA. The sequence is that of Acetyl-coenzyme A carboxylase carboxyl transferase subunit alpha from Clostridium beijerinckii (strain ATCC 51743 / NCIMB 8052) (Clostridium acetobutylicum).